The chain runs to 433 residues: UDP-N-acetylglucosamine 1-carboxyvinyltransferase (433 aa).

34–35 (KN) lines the phosphoenolpyruvate pocket. Residue Arg104 coordinates UDP-N-acetyl-alpha-D-glucosamine. Cys128 acts as the Proton donor in catalysis. Cys128 is subject to 2-(S-cysteinyl)pyruvic acid O-phosphothioketal. Positions 320 and 342 each coordinate UDP-N-acetyl-alpha-D-glucosamine.

The protein belongs to the EPSP synthase family. MurA subfamily.

The protein resides in the cytoplasm. The enzyme catalyses phosphoenolpyruvate + UDP-N-acetyl-alpha-D-glucosamine = UDP-N-acetyl-3-O-(1-carboxyvinyl)-alpha-D-glucosamine + phosphate. Its pathway is cell wall biogenesis; peptidoglycan biosynthesis. In terms of biological role, cell wall formation. Adds enolpyruvyl to UDP-N-acetylglucosamine. The chain is UDP-N-acetylglucosamine 1-carboxyvinyltransferase from Parasynechococcus marenigrum (strain WH8102).